The chain runs to 301 residues: J domain-containing protein 1 (301 aa).

Positions 58 to 150 constitute a J domain; the sequence is TPYDIFGIPK…KKKIVYDTTR (93 aa). Residues 208-228 traverse the membrane as a helical segment; it reads WTVIGIICGLAICIEGTALLA.

The protein belongs to the DnaJ family.

The protein resides in the mitochondrion membrane. Its function is as follows. Probable chaperone. This chain is J domain-containing protein 1 (JID1), found in Saccharomyces cerevisiae (strain ATCC 204508 / S288c) (Baker's yeast).